Reading from the N-terminus, the 466-residue chain is ATP synthase subunit beta (466 aa).

155-162 provides a ligand contact to ATP; it reads GGAGVGKT.

This sequence belongs to the ATPase alpha/beta chains family. F-type ATPases have 2 components, CF(1) - the catalytic core - and CF(0) - the membrane proton channel. CF(1) has five subunits: alpha(3), beta(3), gamma(1), delta(1), epsilon(1). CF(0) has three main subunits: a(1), b(2) and c(9-12). The alpha and beta chains form an alternating ring which encloses part of the gamma chain. CF(1) is attached to CF(0) by a central stalk formed by the gamma and epsilon chains, while a peripheral stalk is formed by the delta and b chains.

It is found in the cell inner membrane. The catalysed reaction is ATP + H2O + 4 H(+)(in) = ADP + phosphate + 5 H(+)(out). Produces ATP from ADP in the presence of a proton gradient across the membrane. The catalytic sites are hosted primarily by the beta subunits. This chain is ATP synthase subunit beta, found in Bordetella petrii (strain ATCC BAA-461 / DSM 12804 / CCUG 43448).